The following is a 180-amino-acid chain: MKKKTIFQCVILFFSILNIHVGMAGPEQVSMHIYGNVVDQGCDVATKSALQNIHIGDFNISDFQAANTVSTAADLNIDITGCAAGITGADVLFSGEADTLAPTLLKLTDTGGSGGMATGIAVQILDAQSQQEIPLNQVQPLTPLKAGDNTLKYQLRYKSTKAGATGGNATAVLYFDLVYQ.

The first 24 residues, methionine 1–alanine 24, serve as a signal peptide directing secretion.

In terms of biological role, part of the elfADCG-ycbUVF fimbrial operon, which promotes adhesion of bacteria to different abiotic surfaces. This is an uncharacterized protein from Escherichia coli (strain K12).